The sequence spans 412 residues: Probable serine/threonine-protein kinase PBL4 (412 aa).

Glycine 2 is lipidated: N-myristoyl glycine. The S-palmitoyl cysteine moiety is linked to residue cysteine 4. A disordered region spans residues 14-40 (RESPYRGSSRISAKRSQSSRLSSLTIQ). Positions 21–40 (SSRISAKRSQSSRLSSLTIQ) are enriched in low complexity. Position 72 is a phosphothreonine (threonine 72). The Protein kinase domain occupies 83 to 369 (FRPDSVIGEG…STLEELEMTL (287 aa)). Residues 89–97 (IGEGGFGYV) and lysine 121 contribute to the ATP site. At tyrosine 167 the chain carries Phosphotyrosine. Aspartate 215 serves as the catalytic Proton acceptor. Serine 219 and serine 249 each carry phosphoserine. Threonine 250 and threonine 255 each carry phosphothreonine. The residue at position 263 (tyrosine 263) is a Phosphotyrosine.

Belongs to the protein kinase superfamily. Ser/Thr protein kinase family.

Its subcellular location is the cell membrane. The enzyme catalyses L-seryl-[protein] + ATP = O-phospho-L-seryl-[protein] + ADP + H(+). It carries out the reaction L-threonyl-[protein] + ATP = O-phospho-L-threonyl-[protein] + ADP + H(+). May be involved in plant defense signaling. This is Probable serine/threonine-protein kinase PBL4 from Arabidopsis thaliana (Mouse-ear cress).